We begin with the raw amino-acid sequence, 498 residues long: Oligopeptide transport system permease protein AmiC (498 aa).

The next 6 helical transmembrane spans lie at Ser-12–Pro-32, Met-279–Val-299, Leu-316–Val-336, Ser-359–Ile-379, Met-415–Leu-435, and Val-461–Ile-481. The 200-residue stretch at Ile-280–Gly-479 folds into the ABC transmembrane type-1 domain.

The protein belongs to the binding-protein-dependent transport system permease family. OppBC subfamily.

Its subcellular location is the cell membrane. Functionally, part of the binding-protein-dependent transport system for oligopeptides; probably responsible for the translocation of the substrate across the membrane. This Streptococcus pneumoniae serotype 4 (strain ATCC BAA-334 / TIGR4) protein is Oligopeptide transport system permease protein AmiC (amiC).